The following is a 207-amino-acid chain: Outer-membrane lipoprotein LolB (207 aa).

A signal peptide spans 1 to 21 (MTLPDFRLIRLLPLASLVLTA). Cys-22 is lipidated: N-palmitoyl cysteine. The S-diacylglycerol cysteine moiety is linked to residue Cys-22.

It belongs to the LolB family. Monomer.

It localises to the cell outer membrane. In terms of biological role, plays a critical role in the incorporation of lipoproteins in the outer membrane after they are released by the LolA protein. In Citrobacter koseri (strain ATCC BAA-895 / CDC 4225-83 / SGSC4696), this protein is Outer-membrane lipoprotein LolB.